Reading from the N-terminus, the 307-residue chain is Leucine-rich repeat-containing protein 59 (307 aa).

Methionine 1 is subject to N-acetylmethionine. Threonine 2 carries the N-acetylthreonine; in Leucine-rich repeat-containing protein 59, N-terminally processed modification. Over 2–244 (TKTGSKGGNL…KPPPRKHNRS (243 aa)) the chain is Cytoplasmic. LRR repeat units follow at residues 10 to 31 (NLRD…NEVP), 40 to 62 (KATV…CGLT), 63 to 84 (HLVK…FGRL), 86 to 107 (NLQH…FAQL), and 109 to 128 (NLKW…AKVA). Serine 23 and serine 25 each carry phosphoserine. Lysine 73 is modified (N6-succinyllysine). The residue at position 135 (lysine 135) is an N6-acetyllysine. Positions 148–216 (MKAVQADQER…KASKREQEKK (69 aa)) form a coiled coil. Residues 150–242 (AVQADQERER…PRKPPPRKHN (93 aa)) form a disordered region. Basic and acidic residues predominate over residues 154 to 221 (DQERERQRRL…EQEKKPKKET (68 aa)). Residues 229–242 (SGSRPRKPPPRKHN) show a composition bias toward basic residues. Residues 245-265 (WAVLKGLLLLLLLCVAGGLVV) form a helical membrane-spanning segment. The Lumenal portion of the chain corresponds to 266–307 (CRVTGLQQQPLCTSVNAIYDNAVQGLRHHEILQWVLQTDSQQ).

As to quaternary structure, can form homodimers. Interacts with SGO1. Interacts with FGF1.

Its subcellular location is the microsome membrane. It localises to the endoplasmic reticulum membrane. It is found in the nucleus envelope. Its function is as follows. Required for nuclear import of FGF1, but not that of FGF2. Might regulate nuclear import of exogenous FGF1 by facilitating interaction with the nuclear import machinery and by transporting cytosolic FGF1 to, and possibly through, the nuclear pores. The polypeptide is Leucine-rich repeat-containing protein 59 (Lrrc59) (Rattus norvegicus (Rat)).